Consider the following 938-residue polypeptide: Collagen alpha-1(I) chain (938 aa).

The segment at 1–938 (GGISVPGPMG…PGPPGPPGPP (938 aa)) is disordered. A 4-hydroxyproline mark is found at P18, P21, P24, P33, P36, P39, P54, P69, P75, P84, and P90. The span at 26-45 (PQGFQGPPGEPGEPGASGPM) shows a compositional bias: low complexity. Residues 57-71 (NGDDGEAGKPGRPGE) show a composition bias toward basic and acidic residues. 5-hydroxylysine; alternate is present on K93. O-linked (Gal...) hydroxylysine; alternate glycosylation is present at K93. S99 carries the post-translational modification Phosphoserine. Over residues 107–135 (DAGPAGPKGRPGASGPAGARGNDGATGAA) the composition is skewed to low complexity. 12 positions are modified to 4-hydroxyproline: P117, P138, P147, P150, P177, P180, P192, P198, P207, P213, P216, and P231. A compositionally biased stretch (pro residues) spans 137–149 (PPGPTGPAGPPGF). Residues 183–222 (AGAAGPAGNPGADGQPGAKGANGAPGIAGAPGFPGARGPS) are compositionally biased toward low complexity. A 5-hydroxylysine modification is found at K234. 4-hydroxyproline occurs at positions 240, 243, 255, 264, 279, 285, 294, and 300. Over residues 289–298 (GERGGPGSRG) the composition is skewed to gly residues. K309 is modified (5-hydroxylysine). 4-hydroxyproline is present on residues P314, P323, P329, P335, P344, P347, P356, P365, P371, P383, P392, P401, P404, P422, P439, P445, P451, P458, P464, P476, P485, P497, P503, P509, and P518. The segment covering 338 to 364 (KGLTGSPGSPGPDGKTGPPGPAGQDGR) has biased composition (low complexity). Low complexity predominate over residues 373–392 (ARGQAGVMGFPGPKGAAGEP). K530 carries the 5-hydroxylysine modification. 3 positions are modified to 4-hydroxyproline: P536, P551, and P557. Residues 563–577 (SGPSGPAGPTGARGA) show a composition bias toward low complexity. S566 carries the phosphoserine modification. A 4-hydroxyproline mark is found at P578, P584, P587, P596, P602, P620, P629, and P638. Positions 590-617 (AGFAGPPGADGQPGAKGEPGDAGAKGDA) are enriched in low complexity. Pro residues predominate over residues 619–631 (PPGPAGPTGPPGP). K641 is subject to 5-hydroxylysine. The segment covering 646–662 (SAGPPGATGFPGAAGRV) has biased composition (low complexity). P650 and P656 each carry 4-hydroxyproline. At P664 the chain carries 3-hydroxyproline. P665, P674, P677, P693, P703, P712, P730, P739, P742, P748, P763, P769, P775, P784, and P790 each carry 4-hydroxyproline. A compositionally biased stretch (pro residues) spans 762–772 (PPGPMGPPGLA). Residue K799 is modified to 5-hydroxylysine. Residues 807-822 (PGPPGAPGAPGAPGPV) show a composition bias toward pro residues. 4-hydroxyproline is present on residues P810, P813, and P816. A compositionally biased stretch (low complexity) spans 843-867 (AGPAGARGPAGPQGPRRGFSGLQGP). A 4-hydroxyproline mark is found at P871, P874, P892, and P907. Residues 874-907 (PGEQGPSGASGPAGPRGPPGSAGSPGKDGLNGLP) show a composition bias toward low complexity. P912 is modified (3-hydroxyproline). A 4-hydroxyproline modification is found at P913. The span at 923-938 (VGPPGPPGPPGPPGPP) shows a compositional bias: pro residues. Position 925 is a 3-hydroxyproline (P925). P926 is subject to 4-hydroxyproline. P928 bears the 3-hydroxyproline mark. P929 is subject to 4-hydroxyproline. Position 931 is a 3-hydroxyproline (P931). 3 positions are modified to 4-hydroxyproline: P932, P935, and P938.

This sequence belongs to the fibrillar collagen family. As to quaternary structure, trimers of one alpha 2(I) and two alpha 1(I) chains. Contains mostly 4-hydroxyproline. Proline residues at the third position of the tripeptide repeating unit (G-X-Y) are hydroxylated in some or all of the chains. In terms of processing, contains 3-hydroxyproline at a few sites. This modification occurs on the first proline residue in the sequence motif Gly-Pro-Hyp, where Hyp is 4-hydroxyproline. Post-translationally, lysine residues at the third position of the tripeptide repeating unit (G-X-Y) are 5-hydroxylated in some or all of the chains. O-glycosylated on hydroxylated lysine residues. The O-linked glycan consists of a Glc-Gal disaccharide. As to expression, expressed in bones.

It is found in the secreted. Its subcellular location is the extracellular space. It localises to the extracellular matrix. Its function is as follows. Type I collagen is a member of group I collagen (fibrillar forming collagen). The polypeptide is Collagen alpha-1(I) chain (Megalonyx jeffersonii (Jefferson's ground sloth)).